A 308-amino-acid polypeptide reads, in one-letter code: Transcription factor JunB (308 aa).

The basic motif stretch occupies residues 229 to 256; it reads RIKAERKRLRNRLAATKCRKRKLERISR. The bZIP domain occupies 229–292; it reads RIKAERKRLR…AQLKQKVLRH (64 aa). The interval 257–285 is leucine-zipper; sequence LEEKVKVLKNDNAGLSNTASVLRDQVAQL.

The protein belongs to the bZIP family. Jun subfamily. Binds DNA as a homodimer or as a heterodimer with another member of the jun/fos family.

It is found in the nucleus. In terms of biological role, transcription factor involved in regulating gene activity following the primary growth factor response. Binds to the DNA sequence 5'-TGA[CG]TCA-3'. This chain is Transcription factor JunB (junb), found in Cyprinus carpio (Common carp).